A 221-amino-acid chain; its full sequence is Deoxyribose-phosphate aldolase (221 aa).

Asp91 acts as the Proton donor/acceptor in catalysis. Lys153 acts as the Schiff-base intermediate with acetaldehyde in catalysis. The active-site Proton donor/acceptor is the Lys182.

The protein belongs to the DeoC/FbaB aldolase family. DeoC type 1 subfamily.

The protein resides in the cytoplasm. The catalysed reaction is 2-deoxy-D-ribose 5-phosphate = D-glyceraldehyde 3-phosphate + acetaldehyde. Its pathway is carbohydrate degradation; 2-deoxy-D-ribose 1-phosphate degradation; D-glyceraldehyde 3-phosphate and acetaldehyde from 2-deoxy-alpha-D-ribose 1-phosphate: step 2/2. Catalyzes a reversible aldol reaction between acetaldehyde and D-glyceraldehyde 3-phosphate to generate 2-deoxy-D-ribose 5-phosphate. The sequence is that of Deoxyribose-phosphate aldolase from Clostridium botulinum (strain Eklund 17B / Type B).